The following is a 217-amino-acid chain: Lectin ADEL (217 aa).

Disulfide bonds link cysteine 5–cysteine 187, cysteine 42–cysteine 68, cysteine 61–cysteine 77, cysteine 114–cysteine 135, and cysteine 142–cysteine 206. Asparagine 30 carries N-linked (GlcNAc...) asparagine glycosylation. 2 N-linked (GlcNAc...) asparagine glycosylation sites follow: asparagine 102 and asparagine 126.

As to quaternary structure, homodimer; disulfide-linked. In terms of processing, contains disulfide bonds.

Its function is as follows. Binds in decreasing order of affinity: galacturonic acid, D-galactosamine, methyl-alpha-D-galactopyranoside and further galactose-containing carbohydrates. Has hemagglutinating activity against human and rabbit erythrocytes. The polypeptide is Lectin ADEL (Aplysia dactylomela (Spotted sea hare)).